Reading from the N-terminus, the 606-residue chain is Kelch-like protein 41 (606 aa).

Ser-3 is subject to Phosphoserine. A BTB domain is found at 33–100 (IDCTLKAGDK…LYSASIDLND (68 aa)). Residues 135–237 (CLAILRLGLL…AEKYFKDHVE (103 aa)) enclose the BACK domain. Kelch repeat units lie at residues 346–398 (QVYV…EVDD), 399–447 (KIYV…SHNG), 448–495 (MIYC…IHKG), 497–542 (IVIA…SLAG), and 544–599 (LYAI…TRLN).

In terms of assembly, interacts with NRAP. Part of a complex that contains CUL3, RBX1 and KLHL41. Interacts with LASP1. In terms of processing, ubiquitinated by E3 ubiquitin ligase complex formed by CUL3 and RBX1 and probably targeted for proteasome-independent degradation. Quinone-induced oxidative stress increases its ubiquitination. As to expression, primarily expressed in skeletal muscle. Also found in heart and lung.

The protein resides in the cytoplasm. Its subcellular location is the cytoskeleton. It is found in the cell projection. The protein localises to the pseudopodium. It localises to the ruffle. The protein resides in the myofibril. Its subcellular location is the sarcomere. It is found in the m line. The protein localises to the sarcoplasmic reticulum membrane. It localises to the endoplasmic reticulum membrane. In terms of biological role, involved in skeletal muscle development and differentiation. Regulates proliferation and differentiation of myoblasts and plays a role in myofibril assembly by promoting lateral fusion of adjacent thin fibrils into mature, wide myofibrils. Required for pseudopod elongation in transformed cells. This chain is Kelch-like protein 41 (Klhl41), found in Rattus norvegicus (Rat).